We begin with the raw amino-acid sequence, 419 residues long: Glutamate dehydrogenase (419 aa).

Lys-105 is a catalytic residue. NAD(+) is bound at residue 219–225 (GYGNAGY).

It belongs to the Glu/Leu/Phe/Val dehydrogenases family. In terms of assembly, homohexamer.

Its subcellular location is the cytoplasm. It carries out the reaction L-glutamate + NAD(+) + H2O = 2-oxoglutarate + NH4(+) + NADH + H(+). The catalysed reaction is L-glutamate + NADP(+) + H2O = 2-oxoglutarate + NH4(+) + NADPH + H(+). The protein is Glutamate dehydrogenase (gdhA) of Thermococcus litoralis (strain ATCC 51850 / DSM 5473 / JCM 8560 / NS-C).